Consider the following 967-residue polypeptide: Isoleucine--tRNA ligase (967 aa).

The 'HIGH' region signature appears at 68–78 (PYANGTLHMGH). Glu-583 serves as a coordination point for L-isoleucyl-5'-AMP. Positions 624-628 (KMSKS) match the 'KMSKS' region motif. Lys-627 contributes to the ATP binding site. Zn(2+) contacts are provided by Cys-937, Cys-940, Cys-957, and Cys-960.

It belongs to the class-I aminoacyl-tRNA synthetase family. IleS type 1 subfamily. As to quaternary structure, monomer. Zn(2+) serves as cofactor.

The protein resides in the cytoplasm. The enzyme catalyses tRNA(Ile) + L-isoleucine + ATP = L-isoleucyl-tRNA(Ile) + AMP + diphosphate. Catalyzes the attachment of isoleucine to tRNA(Ile). As IleRS can inadvertently accommodate and process structurally similar amino acids such as valine, to avoid such errors it has two additional distinct tRNA(Ile)-dependent editing activities. One activity is designated as 'pretransfer' editing and involves the hydrolysis of activated Val-AMP. The other activity is designated 'posttransfer' editing and involves deacylation of mischarged Val-tRNA(Ile). This Prochlorococcus marinus (strain NATL2A) protein is Isoleucine--tRNA ligase.